The following is a 547-amino-acid chain: Chaperonin GroEL (547 aa).

ATP-binding positions include 30–33, Lys-51, 87–91, Gly-415, and Asp-496; these read TLGP and DGTTT.

It belongs to the chaperonin (HSP60) family. In terms of assembly, forms a cylinder of 14 subunits composed of two heptameric rings stacked back-to-back. Interacts with the co-chaperonin GroES.

Its subcellular location is the cytoplasm. The catalysed reaction is ATP + H2O + a folded polypeptide = ADP + phosphate + an unfolded polypeptide.. Functionally, together with its co-chaperonin GroES, plays an essential role in assisting protein folding. The GroEL-GroES system forms a nano-cage that allows encapsulation of the non-native substrate proteins and provides a physical environment optimized to promote and accelerate protein folding. In Chlorobium phaeobacteroides (strain DSM 266 / SMG 266 / 2430), this protein is Chaperonin GroEL.